The following is a 148-amino-acid chain: Nucleoside diphosphate kinase B (148 aa).

The ATP site is built by Lys-9, Phe-57, Arg-85, Thr-91, Arg-102, and Asn-112. His-115 acts as the Pros-phosphohistidine intermediate in catalysis.

The protein belongs to the NDK family. Mg(2+) serves as cofactor.

The catalysed reaction is a 2'-deoxyribonucleoside 5'-diphosphate + ATP = a 2'-deoxyribonucleoside 5'-triphosphate + ADP. The enzyme catalyses a ribonucleoside 5'-diphosphate + ATP = a ribonucleoside 5'-triphosphate + ADP. Functionally, major role in the synthesis of nucleoside triphosphates other than ATP. The ATP gamma phosphate is transferred to the NDP beta phosphate via a ping-pong mechanism, using a phosphorylated active-site intermediate. The sequence is that of Nucleoside diphosphate kinase B from Flaveria bidentis (Coastal plain yellowtops).